A 439-amino-acid chain; its full sequence is Ribosomal protein uS12 methylthiotransferase RimO (439 aa).

Residues 3–115 (KKLHLISLGC…IDQMVRERQG (113 aa)) enclose the MTTase N-terminal domain. [4Fe-4S] cluster-binding residues include C12, C46, C78, C147, C151, and C154. The region spanning 133–362 (TGSSVHAYVK…DKIIQKQHRA (230 aa)) is the Radical SAM core domain.

It belongs to the methylthiotransferase family. RimO subfamily. [4Fe-4S] cluster serves as cofactor.

The protein localises to the cytoplasm. It carries out the reaction L-aspartate(89)-[ribosomal protein uS12]-hydrogen + (sulfur carrier)-SH + AH2 + 2 S-adenosyl-L-methionine = 3-methylsulfanyl-L-aspartate(89)-[ribosomal protein uS12]-hydrogen + (sulfur carrier)-H + 5'-deoxyadenosine + L-methionine + A + S-adenosyl-L-homocysteine + 2 H(+). Its function is as follows. Catalyzes the methylthiolation of an aspartic acid residue of ribosomal protein uS12. In Wolinella succinogenes (strain ATCC 29543 / DSM 1740 / CCUG 13145 / JCM 31913 / LMG 7466 / NCTC 11488 / FDC 602W) (Vibrio succinogenes), this protein is Ribosomal protein uS12 methylthiotransferase RimO.